The primary structure comprises 422 residues: Cytokine receptor-like factor 1 (422 aa).

An N-terminal signal peptide occupies residues 1–37; that stretch reads MPAGRRGPAAQSARRPPPLLPLLLLLCVLGAPRAGSG. In terms of domain architecture, Ig-like C2-type spans 38 to 131; the sequence is AHTAVISPQD…SILAGSCLYV (94 aa). Asn-92, Asn-104, and Asn-140 each carry an N-linked (GlcNAc...) asparagine glycan. Fibronectin type-III domains are found at residues 137 to 232 and 237 to 341; these read KPVN…ILDV and PPPD…TPRS. Cys-143 and Cys-153 are disulfide-bonded. The N-linked (GlcNAc...) asparagine glycan is linked to Asn-168. Cys-184 and Cys-195 are disulfide-bonded. The residue at position 219 (Ser-219) is a Phosphoserine. N-linked (GlcNAc...) asparagine glycosylation is present at Asn-292. The short motif at 327–331 is the WSXWS motif element; the sequence is WSEWS. A disordered region spans residues 332-363; the sequence is HPTAASTPRSERPGPGGGACEPRGGEPSSGPV. Asn-382 carries an N-linked (GlcNAc...) asparagine glycan. A disordered region spans residues 399–422; that stretch reads HKTRNQDEGILPSGRRGTARGPAR.

It belongs to the type I cytokine receptor family. Type 3 subfamily. In terms of assembly, forms covalent di- and tetramers. Forms a heteromeric complex with cardiotrophin-like cytokine CLCF1/CLC; the CRLF1-CLCF1 complex is a ligand for the ciliary neurotrophic factor receptor/CNTFR. The CRLF1-CLCF1 heterodimer binds SORL1 (via N-terminal ectodomain); within this complex, the interaction is mediated predominantly by the CRLF1 moiety. The tripartite signaling complex formed by CRLF1, CLCF1 and CNTFR also binds SORL1. Highest levels of expression observed in spleen, thymus, lymph node, appendix, bone marrow, stomach, placenta, heart, thyroid and ovary. Strongly expressed also in fetal lung.

The protein localises to the secreted. Its function is as follows. In complex with CLCF1, forms a heterodimeric neurotropic cytokine that plays a crucial role during neuronal development. May also play a regulatory role in the immune system. The sequence is that of Cytokine receptor-like factor 1 (CRLF1) from Homo sapiens (Human).